The chain runs to 210 residues: MEHHKTYHSANIKTATGSLLIEGPVSPEDLAGYEFHKDLTAFRPPREQHEALVDIAGLPEGRIIIARDGRTIVGYVTYLYPDPLERWSEGNMEDLIELGAIEVAPDYRGCAVGKTLLTVSMMDEQMENYIVMTTEYYWHWDLKGMKKDVWEYRKIMEKMMNAGGLVWFATDEPEISSHPANCLMARIGKNVSQESIEQFDRLRFYHRYMY.

Residues 20–161 (LIEGPVSPED…YRKIMEKMMN (142 aa)) form the N-acetyltransferase domain.

This sequence belongs to the acetyltransferase family. In terms of assembly, monomer.

It participates in ketone degradation; acetoin degradation. Activity is sensitive to salt concentration, a high concentration of KCL (500 mM) is needed for complete inactivation. In terms of biological role, part of the acuABC operon, which is possibly involved in the breakdown of acetoin and butanediol. Acts as an acetyltransferase inactivating acetyl-CoA synthetase AcsA via acetylation at a Lys residue. This chain is Acetoin utilization protein AcuA (acuA), found in Bacillus subtilis (strain 168).